A 531-amino-acid chain; its full sequence is Anthranilate synthase component 1 (531 aa).

L-tryptophan contacts are provided by residues Ser56 and 284 to 286 (PYM). Residue 324–325 (GS) coordinates chorismate. Glu351 contacts Mg(2+). Residues Tyr439, Arg459, 473 to 475 (GGG), and Gly475 contribute to the chorismate site. Residue Glu488 coordinates Mg(2+). Positions 506–531 (LHNITPDSVSAPDSVSSPDSVTEANS) are disordered. Residues 511 to 531 (PDSVSAPDSVSSPDSVTEANS) are compositionally biased toward low complexity.

The protein belongs to the anthranilate synthase component I family. As to quaternary structure, heterotetramer consisting of two non-identical subunits: a beta subunit (TrpG) and a large alpha subunit (TrpE). Requires Mg(2+) as cofactor.

The enzyme catalyses chorismate + L-glutamine = anthranilate + pyruvate + L-glutamate + H(+). The protein operates within amino-acid biosynthesis; L-tryptophan biosynthesis; L-tryptophan from chorismate: step 1/5. Feedback inhibited by tryptophan. In terms of biological role, part of a heterotetrameric complex that catalyzes the two-step biosynthesis of anthranilate, an intermediate in the biosynthesis of L-tryptophan. In the first step, the glutamine-binding beta subunit (TrpG) of anthranilate synthase (AS) provides the glutamine amidotransferase activity which generates ammonia as a substrate that, along with chorismate, is used in the second step, catalyzed by the large alpha subunit of AS (TrpE) to produce anthranilate. In the absence of TrpG, TrpE can synthesize anthranilate directly from chorismate and high concentrations of ammonia. The polypeptide is Anthranilate synthase component 1 (trpE) (Arthrobacter globiformis).